We begin with the raw amino-acid sequence, 72 residues long: Large ribosomal subunit protein uL29 (72 aa).

This sequence belongs to the universal ribosomal protein uL29 family.

This chain is Large ribosomal subunit protein uL29, found in Prochlorococcus marinus (strain MIT 9515).